The sequence spans 301 residues: MTSRYERQEKIGEGTYGVVYKARDTSTAATVALKRIRLDSEEEGVPCTAIREISLLKELRHENIVKLLDVCHSEHRLTIVFEYLDLDLKKYLDRENGNLDAATIQHFMRDLLRGVAFCHQRSVLHRDLKPQNLLISREKELKLGDFGLGRSFAIPVRKFTNEVVTLWYRPPDVLLGSMQYGPPVDVWSVGCIFSEMATGTPLFAGKNDADQLMRIFRFLGTPNNRVWPSMNQYPNSNNMLSQPEFLQNFEPEWSNVLGSVPGYEKLGCAGVDLLERLLRYEPSERITAADALNHPYFSLQF.

The region spanning 5–297 (YERQEKIGEG…AADALNHPYF (293 aa)) is the Protein kinase domain. Residues 11-19 (IGEGTYGVV) and K34 contribute to the ATP site. Residue D127 is the Proton acceptor of the active site. Phosphothreonine; by CAK is present on T160.

The protein belongs to the protein kinase superfamily. CMGC Ser/Thr protein kinase family. CDC2/CDKX subfamily. Forms a stable but non-covalent complex with a regulatory subunit and with a cyclin.

It carries out the reaction [DNA-directed RNA polymerase] + ATP = phospho-[DNA-directed RNA polymerase] + ADP + H(+). Phosphorylation at Thr-15 or Tyr-16 inactivates the enzyme, while phosphorylation at Thr-160 activates it. Its function is as follows. May be involved in some stage-specific role in the promastigote cell cycle. The chain is Cell division protein kinase 2 homolog CRK1 (CRK1) from Leishmania mexicana.